The following is a 378-amino-acid chain: Tyrosinase-like protein phomQ1' (378 aa).

Residues 42-62 form a helical membrane-spanning segment; it reads TIIVVSVITFAAIIGCWVFLS. Histidine 130 and histidine 139 together coordinate Cu cation. Asparagine 209 carries an N-linked (GlcNAc...) asparagine glycan. Cu cation is bound by residues histidine 279 and histidine 305.

It belongs to the tyrosinase family. It depends on Cu(2+) as a cofactor.

Its subcellular location is the membrane. It functions in the pathway mycotoxin biosynthesis. Functionally, tyrosinase-like protein; part of the gene cluster that mediates the biosynthesis of the phomopsins, a group of hexapeptide mycotoxins which infects lupins and causes lupinosis disease in livestock. The pathway starts with the processing of the precursor phomA' by several endopeptidases including kexin proteases as well as the cluster-specific S41 family peptidase phomP1 and the oligopeptidase phomG' to produce 10 identical copies of the hexapeptide Tyr-Val-Ile-Pro-Ile-Asp. After being excised from the precursor peptide, the core peptides are cyclized and modified post-translationally by enzymes encoded within the gene cluster. The timing and order of proteolysis of the phomA' precursor and PTMs are still unknown. Two tyrosinase-like enzymes, phomQ1' and phomQ2, catalyze the chlorination and hydroxylation of Tyr, respectively. PhomYb, is proposed to be involved in the construction of the macrocyclic structure. The other 4 ustYa family proteins may be involved in PTMs that generate the unique structure of phomopsin A. PhomYa' is required for the hydroxylation of C-beta of Tyr. PhomYc', phomYd', and phomYe are responsible for the biosynthesis of 2,3-dehydroisoleucine (dIle), 2,3-dehydroaspartic acid (dAsp), and 3,4-dehydroproline (dPro), respectively. While dIle formation by phomYc' is indispensable for the installation of dAsp by phomYd', the order of the other PTMs have not been elucidated yet. Most of the biosynthetic enzymes likely have broad substrate specificity, and thus, there might be a metabolic grid from a precursor to phomopsin A. The enzyme(s) responsible for the biosynthesis of 3,4-dehydrovaline (dVal) have also not been identified yet. Finally, phomM' acts as an S-adenosylmethionine-dependent alpha-N-methyltransferase that catalyzes two successive N-methylation reactions, converting N-desmethyl-phomopsin A to phomopsin A and phomopsin A further to an N,N-dimethylated congener called phomopsin E. In Diaporthe leptostromiformis (Lupinosis disease fungus), this protein is Tyrosinase-like protein phomQ1'.